The sequence spans 336 residues: Antigen-presenting glycoprotein CD1d1 (336 aa).

An N-terminal signal peptide occupies residues 1–21; that stretch reads MRYLPWLLLWAFLQVWGQSEA. At 22 to 305 the chain is on the extracellular side; it reads QQKNYTFRCL…YWDARQAPVG (284 aa). Asparagine 25, asparagine 38, and asparagine 60 each carry an N-linked (GlcNAc...) asparagine glycan. Aspartate 98 serves as a coordination point for a D-galactosylceramide. 2 cysteine pairs are disulfide-bonded: cysteine 122-cysteine 186 and cysteine 226-cysteine 281. The N-linked (GlcNAc...) asparagine glycan is linked to asparagine 128. A D-galactosylceramide is bound at residue 171–174; the sequence is DQGT. N-linked (GlcNAc...) asparagine glycosylation is present at asparagine 183. Residues 207-297 form the Ig-like domain; that stretch reads PVAWLSSVPS…LGGQDIILYW (91 aa). A helical transmembrane segment spans residues 306–326; it reads LIVFIVLIMLVVVGAVVYYIW. At 327–336 the chain is on the cytoplasmic side; it reads RRRSAYQDIR. Positions 332-335 match the Internalization signal motif; that stretch reads YQDI.

As to quaternary structure, heterodimer with B2M (beta-2-microglobulin). Interacts with MHC II and CD74. In terms of processing, N-glycosylated. As to expression, expressed on cortical thymocytes, on certain T-cell leukemias, and in various other tissues.

The protein localises to the cell membrane. It is found in the endosome membrane. Its subcellular location is the lysosome membrane. In terms of biological role, antigen-presenting protein that binds self and non-self glycolipids and presents them to T-cell receptors on natural killer T-cells. The polypeptide is Antigen-presenting glycoprotein CD1d1 (Cd1d1) (Mus musculus (Mouse)).